We begin with the raw amino-acid sequence, 1274 residues long: MEQNGLDHDSRSSIDTTINDTQKTFLEFRSYTQLSEKLASSSSYTAPPLNEDGPKGVASAVSQGSESVVSWTTLTHVYSILGAYGGPTCLYPTATYFLMGTSKGCVLIFNYNEHLQTILVPTLSEDPSIHSIRSPVKSIVICSDGTHVAASYETGNICIWNLNVGYRVKPTSEPTNGMTPTPALPAVLHIDDHVNKEITGLDFFGARHTALIVSDRTGKVSLYNGYRRGFWQLVYNSKKILDVNSSKEKLIRSKLSPLISREKISTNLLSVLTTTHFALILLSPHVSLMFQETVEPSVQNSLVVNSSISWTQNCSRVAYSVNNKISVISISSSDFNVQSASHSPEFAESILSIQWIDQLLLGVLTISHQFLVLHPQHDFKILLRLDFLIHDLMIPPNKYFVISRRSFYLLTNYSFKIGKFVSWSDITLRHILKGDYLGALEFIESLLQPYCPLANLLKLDNNTEERTKQLMEPFYNLSLAALRFLIKKDNADYNRVYQLLMVVVRVLQQSSKKLDSIPSLDVFLEQGLEFFELKDNAVYFEVVANIVAQGSVTSISPVLFRSIIDYYAKEENLKVIEDLIIMLNPTTLDVDLAVKLCQKYNLFDLLIYIWNKIFDDYQTPVVDLIYRISNQSEKCVIFNGPQVPPETTIFDYVTYILTGRQYPQNLSISPSDKCSKIQRELSAFIFSGFSIKWPSNSNHKLYICENPEEEPAFPYFHLLLKSNPSRFLAMLNEVFEASLFNDDNDMVASVGEAELVSRQYVIDLLLDAMKDTGNSDNIRVLVAIFIATSISKYPQFIKVSNQALDCVVNTICSSRVQGIYEISQIALESLLPYYHSRTTENFILELKEKNFNKVLFHIYKSENKYASALSLILETKDIEKEYNTDIVSITDYILKKCPPGSLECGKVTEVIETNFDLLLSRIGIEKCVTIFSDFDYNLHQEILEVKNEETQQKYLDKLFSTPNINNKVDKRLRNLHIELNCKYKSKREMILWLNGTVLSNAESLQILDLLNQDSNFEAAAIIHERLESFNLAVRDLLSFIEQCLNEGKTNISTLLESLRRAFDDCNSAGTEKKSCWILLITFLITLYGKYPSHDERKDLCNKLLQEAFLGLVRSKSSSQKDSGGEFWEIMSSVLEHQDVILMKVQDLKQLLLNVFNTYKLERSLSELIQKIIEDSSQDLVQQYRKFLSEGWSIHTDDCEICGKKIWGAGLDPLLFLAWENVQRHQDMISVDLKTPLVIFKCHHGFHQTCLENLAQKPDEYSCLICQTESNPKIV.

M1 is modified (N-acetylmethionine). WD repeat units follow at residues 75–119, 131–170, and 193–233; these read THVY…QTIL, SIRS…RVKP, and HVNK…FWQL. CHCR repeat units lie at residues 507-665 and 915-1092; these read LQQS…YPQN and FDLL…KYPS. The RING-type; atypical zinc finger occupies 1198–1266; it reads CEICGKKIWG…PDEYSCLICQ (69 aa).

This sequence belongs to the VPS8 family.

The protein localises to the golgi apparatus. Its subcellular location is the golgi stack. Required for localization and recycling of the CPY sorting receptor (VPS10) to the late-Golgi compartment. Involved in the retention of proteins to the late-Golgi. Plays an integral role in the complex vacuolar protein sorting process. The sequence is that of Vacuolar protein sorting-associated protein 8 (VPS8) from Saccharomyces cerevisiae (strain ATCC 204508 / S288c) (Baker's yeast).